We begin with the raw amino-acid sequence, 306 residues long: BRCA2 and CDKN1A-interacting protein (306 aa).

Over residues Met1 to Val10 the composition is skewed to basic residues. The interval Met1–Val45 is disordered. Over residues Gly18–Val45 the composition is skewed to acidic residues. Phosphoserine is present on residues Ser34 and Ser104. The interval Ile51–Arg159 is interaction with BRCA2. The segment at Met153–Lys251 is interaction with CDKN1A. At Ser273 the chain carries Phosphoserine.

It belongs to the BCP1 family. In terms of assembly, interacts with BRCA2, CDKN1A and MTDH/LYRIC. Interacts with DCTN1/p150-glued and ACTR1A/ARP1. Interacts with alpha-, beta- and gamma-tubulins. Interacts with TENT5C; the interaction has no effect on TENT5C poly(A) polymerase function.

Its subcellular location is the nucleus. It is found in the cytoplasm. It localises to the cytoskeleton. The protein resides in the microtubule organizing center. The protein localises to the centrosome. Its subcellular location is the centriole. It is found in the spindle pole. Functionally, during interphase, required for microtubule organizing and anchoring activities. During mitosis, required for the organization and stabilization of the spindle pole. May promote cell cycle arrest by enhancing the inhibition of CDK2 activity by CDKN1A. May be required for repair of DNA damage by homologous recombination in conjunction with BRCA2. May not be involved in non-homologous end joining (NHEJ). In Bos taurus (Bovine), this protein is BRCA2 and CDKN1A-interacting protein (BCCIP).